Reading from the N-terminus, the 105-residue chain is Small ribosomal subunit protein uS10c (105 aa).

The protein belongs to the universal ribosomal protein uS10 family. Part of the 30S ribosomal subunit.

The protein resides in the plastid. It is found in the chloroplast. Its function is as follows. Involved in the binding of tRNA to the ribosomes. This is Small ribosomal subunit protein uS10c from Porphyra purpurea (Red seaweed).